A 148-amino-acid chain; its full sequence is Large ribosomal subunit protein bL9 (148 aa).

This sequence belongs to the bacterial ribosomal protein bL9 family.

In terms of biological role, binds to the 23S rRNA. The chain is Large ribosomal subunit protein bL9 from Frankia alni (strain DSM 45986 / CECT 9034 / ACN14a).